Consider the following 471-residue polypeptide: UDP-N-acetylmuramoylalanine--D-glutamate ligase (471 aa).

135–141 serves as a coordination point for ATP; that stretch reads GTNGKTT.

This sequence belongs to the MurCDEF family.

The protein resides in the cytoplasm. The enzyme catalyses UDP-N-acetyl-alpha-D-muramoyl-L-alanine + D-glutamate + ATP = UDP-N-acetyl-alpha-D-muramoyl-L-alanyl-D-glutamate + ADP + phosphate + H(+). The protein operates within cell wall biogenesis; peptidoglycan biosynthesis. In terms of biological role, cell wall formation. Catalyzes the addition of glutamate to the nucleotide precursor UDP-N-acetylmuramoyl-L-alanine (UMA). In Frankia casuarinae (strain DSM 45818 / CECT 9043 / HFP020203 / CcI3), this protein is UDP-N-acetylmuramoylalanine--D-glutamate ligase.